The sequence spans 205 residues: Deoxyuridine 5'-triphosphate nucleotidohydrolase (205 aa).

Ser54 is modified (phosphoserine). Substrate-binding positions include 126–128, 140–143, Gly151, and 199–200; these read RSG, GVID, and FG.

It belongs to the dUTPase family. In terms of assembly, homotrimer. The cofactor is Mg(2+). In terms of tissue distribution, expressed in all tissues examined. Higher levels in heart and kidney.

Its subcellular location is the cytoplasm. The protein localises to the nucleus. It carries out the reaction dUTP + H2O = dUMP + diphosphate + H(+). It functions in the pathway pyrimidine metabolism; dUMP biosynthesis; dUMP from dCTP (dUTP route): step 2/2. Catalyzes the cleavage of 2'-deoxyuridine 5'-triphosphate (dUTP) into 2'-deoxyuridine 5'-monophosphate (dUMP) and inorganic pyrophosphate and through its action efficiently prevents uracil misincorporation into DNA and at the same time provides dUMP, the substrate for de novo thymidylate biosynthesis. Inhibits peroxisome proliferator-activated receptor (PPAR) activity by binding of its N-terminal to PPAR, preventing the latter's dimerization with retinoid X receptor. Essential for embryonic development. The protein is Deoxyuridine 5'-triphosphate nucleotidohydrolase (Dut) of Rattus norvegicus (Rat).